The primary structure comprises 142 residues: FAD synthase (142 aa).

Residues 9-10 (TF), 14-17 (HPGH), and Asp92 contribute to the ATP site.

The protein belongs to the archaeal FAD synthase family. As to quaternary structure, homodimer. A divalent metal cation is required as a cofactor.

It catalyses the reaction FMN + ATP + H(+) = FAD + diphosphate. It participates in cofactor biosynthesis; FAD biosynthesis; FAD from FMN: step 1/1. Its function is as follows. Catalyzes the transfer of the AMP portion of ATP to flavin mononucleotide (FMN) to produce flavin adenine dinucleotide (FAD) coenzyme. The sequence is that of FAD synthase from Halalkalicoccus jeotgali (strain DSM 18796 / CECT 7217 / JCM 14584 / KCTC 4019 / B3).